Consider the following 112-residue polypeptide: MYDHAHSLARALKESQEYKSFQAAREKIKGKPAAEQMIADFHKRQMELQAEVLQGKELTQEQKEGLERLYNVLIQDLDIRDYLMAEQRLGTLLSDVYKIIGEAVDVDLPFTK.

This sequence belongs to the UPF0342 family.

The protein is UPF0342 protein STH1710 of Symbiobacterium thermophilum (strain DSM 24528 / JCM 14929 / IAM 14863 / T).